The following is a 197-amino-acid chain: Adrenodoxin-like protein 1, mitochondrial (197 aa).

The N-terminal 35 residues, 1–35 (MIGHRISRLGSTIVKQLAREGYLATYGTKNLHRSY), are a transit peptide targeting the mitochondrion. In terms of domain architecture, 2Fe-2S ferredoxin-type spans 79-184 (EKITIIFVDK…GVRLAIPSAT (106 aa)). Residues Cys-118, Cys-124, Cys-127, and Cys-165 each coordinate [2Fe-2S] cluster.

The protein belongs to the adrenodoxin/putidaredoxin family. It depends on [2Fe-2S] cluster as a cofactor.

It is found in the mitochondrion matrix. Its function is as follows. Associates in vitro with the adrenodoxin reductase MFDR to form an efficient low potential electron transfer chain that is able to reduce cytochrome C. Functions as accessory mitochondrial protein involved with BIO2 in the plant biotin synthase reaction. The protein is Adrenodoxin-like protein 1, mitochondrial of Arabidopsis thaliana (Mouse-ear cress).